Consider the following 398-residue polypeptide: G2/mitotic-specific cyclin-B2 (398 aa).

T8 is modified (phosphothreonine). S11, S77, and S92 each carry phosphoserine. T94 is modified (phosphothreonine). Residues S99, S392, and S398 each carry the phosphoserine modification.

Belongs to the cyclin family. Cyclin AB subfamily. As to quaternary structure, interacts with the CDK1 protein kinase to form a serine/threonine kinase holoenzyme complex also known as maturation promoting factor (MPF). The cyclin subunit imparts substrate specificity to the complex.

In terms of biological role, essential for the control of the cell cycle at the G2/M (mitosis) transition. This Homo sapiens (Human) protein is G2/mitotic-specific cyclin-B2 (CCNB2).